The primary structure comprises 184 residues: Elongation factor P (184 aa).

This sequence belongs to the elongation factor P family.

It is found in the cytoplasm. It functions in the pathway protein biosynthesis; polypeptide chain elongation. Its function is as follows. Involved in peptide bond synthesis. Stimulates efficient translation and peptide-bond synthesis on native or reconstituted 70S ribosomes in vitro. Probably functions indirectly by altering the affinity of the ribosome for aminoacyl-tRNA, thus increasing their reactivity as acceptors for peptidyl transferase. The protein is Elongation factor P of Mycoplasma mycoides subsp. mycoides SC (strain CCUG 32753 / NCTC 10114 / PG1).